The following is a 204-amino-acid chain: GATA transcription factor 14 (204 aa).

Residues 57–66 show a composition bias toward basic and acidic residues; sequence REFDTNDSKP. Residues 57 to 102 are disordered; sequence REFDTNDSKPSRNFSNLPTATRGRLHAPKRSGNKRGRQKRLSFKSP. A compositionally biased stretch (basic residues) spans 79 to 98; sequence GRLHAPKRSGNKRGRQKRLS. The GATA-type zinc finger occupies 111 to 165; sequence GITDKSCSHCGTRKTPLWREGPRGAGTLCNACGMRYRTGRLLPEYRPASSPDFKP. Positions 180–204 are disordered; it reads RERKSSPPNSFGFSESYHSTRKLGF. A compositionally biased stretch (polar residues) spans 185 to 196; the sequence is SPPNSFGFSESY.

The protein belongs to the type IV zinc-finger family. Class A subfamily.

The protein resides in the nucleus. In terms of biological role, transcriptional activator that specifically binds 5'-GATA-3' or 5'-GAT-3' motifs within gene promoters. May be involved in the regulation of some light-responsive genes. In Arabidopsis thaliana (Mouse-ear cress), this protein is GATA transcription factor 14 (GATA14).